Here is a 228-residue protein sequence, read N- to C-terminus: Nucleolar protein 12 (228 aa).

The disordered stretch occupies residues 1 to 22 (MGKSDRLQQGSKGKGGGKRKHG). A coiled-coil region spans residues 40 to 103 (FHKRKLERRR…AITATTECVQ (64 aa)). The span at 126–145 (LLEPAQRDGGDGEERERTEA) shows a compositional bias: basic and acidic residues. Positions 126–228 (LLEPAQRDGG…QTGRNERSQD (103 aa)) are disordered. Residues 158-170 (KIQSLTASLNSLV) are compositionally biased toward polar residues. Residues 171 to 180 (KQKKRRKQKR) show a composition bias toward basic residues. Residues 181–195 (RQEAKQRSHQSDRKS) show a composition bias toward basic and acidic residues. Basic residues predominate over residues 204–220 (NKQKQGKSTKRQRRRQT).

Belongs to the RRP17 family.

It is found in the nucleus. The protein resides in the nucleolus. May bind to rRNA. This Danio rerio (Zebrafish) protein is Nucleolar protein 12 (nol12).